We begin with the raw amino-acid sequence, 965 residues long: Calsyntenin-2 (965 aa).

Positions 1-20 (MLPGRLCLVPLLLALGVGSG) are cleaved as a signal peptide. The Extracellular portion of the chain corresponds to 21–835 (GGSGDGGDSR…SIQRSSVVPS (815 aa)). 2 consecutive Cadherin domains span residues 46 to 162 (IETS…APTF) and 163 to 282 (KEPA…MPLF). N-linked (GlcNAc...) asparagine glycans are attached at residues N58 and N100. N-linked (GlcNAc...) asparagine glycosylation is found at N344, N376, N720, and N733. Residues 836-856 (IATVVIIISVCMLVFVVAMGV) traverse the membrane as a helical segment. Over 857–965 (YRVRIAHQHF…NTAGVINIWK (109 aa)) the chain is Cytoplasmic. The interval 891 to 965 (PMEKHEGPGH…NTAGVINIWK (75 aa)) is disordered. The span at 892 to 902 (MEKHEGPGHGE) shows a compositional bias: basic and acidic residues. Positions 903-915 (DETEGEEEEEAEE) are enriched in acidic residues. Residues 942 to 959 (QSGTSSQRPERSTWNTAG) show a composition bias toward polar residues.

Belongs to the calsyntenin family. Proteolytically processed under normal cellular conditions. A primary zeta-cleavage generates a large extracellular (soluble) N-terminal domain (sAlc) and a short C-terminal transmembrane fragment (CTF1). A secondary cleavage catalyzed by gamma-secretase within the transmembrane domain releases the beta-Alc-gamma chain in the extracellular milieu and produces an intracellular fragment (AlcICD). This processing is strongly suppressed in the tripartite complex formed with APBA2 and APP, which seems to prevent the association with PSEN1.

It is found in the postsynaptic cell membrane. It localises to the endoplasmic reticulum membrane. The protein localises to the golgi apparatus membrane. The protein resides in the cell projection. Its subcellular location is the dendrite. Its function is as follows. Postsynaptic adhesion molecule that binds to presynaptic neurexins to mediate synapse formation, and which is involved in learning and memory. Promotes synapse development by acting as a cell adhesion molecule at the postsynaptic membrane, which associates with neurexin-alpha at the presynaptic membrane. The sequence is that of Calsyntenin-2 from Rattus norvegicus (Rat).